The sequence spans 558 residues: Glutamine--tRNA ligase (558 aa).

The short motif at 34 to 44 (PEPNGYLHIGH) is the 'HIGH' region element. Residues 35-37 (EPN) and 41-47 (HIGHAKS) contribute to the ATP site. L-glutamine contacts are provided by aspartate 67 and tyrosine 212. ATP contacts are provided by residues threonine 231, 261–262 (RL), and 269–271 (LSK). The 'KMSKS' region motif lies at 268–272 (VLSKR).

The protein belongs to the class-I aminoacyl-tRNA synthetase family. In terms of assembly, monomer.

Its subcellular location is the cytoplasm. The enzyme catalyses tRNA(Gln) + L-glutamine + ATP = L-glutaminyl-tRNA(Gln) + AMP + diphosphate. In Pseudoalteromonas atlantica (strain T6c / ATCC BAA-1087), this protein is Glutamine--tRNA ligase.